Consider the following 324-residue polypeptide: Glyoxylate/hydroxypyruvate reductase B (324 aa).

Catalysis depends on residues R237 and E266. H285 functions as the Proton donor in the catalytic mechanism.

It belongs to the D-isomer specific 2-hydroxyacid dehydrogenase family. GhrB subfamily. In terms of assembly, homodimer.

It localises to the cytoplasm. It catalyses the reaction glycolate + NADP(+) = glyoxylate + NADPH + H(+). The catalysed reaction is (R)-glycerate + NAD(+) = 3-hydroxypyruvate + NADH + H(+). The enzyme catalyses (R)-glycerate + NADP(+) = 3-hydroxypyruvate + NADPH + H(+). Catalyzes the NADPH-dependent reduction of glyoxylate and hydroxypyruvate into glycolate and glycerate, respectively. The chain is Glyoxylate/hydroxypyruvate reductase B from Cronobacter sakazakii (strain ATCC BAA-894) (Enterobacter sakazakii).